The following is a 613-amino-acid chain: Thymidine kinase (613 aa).

Disordered stretches follow at residues 1 to 233 (MAEG…GVKS) and 253 to 276 (SDGEKHKQQQRPGGSGAPGGATPR). Positions 8 to 18 (FSSSSTSSEEA) are enriched in low complexity. Positions 78–88 (PKNEPRPERGK) are enriched in basic and acidic residues. The span at 114 to 126 (LGSRTRSKSRSRD) shows a compositional bias: basic residues. Positions 199 to 218 (HRYDKPSYDEEVCQKKDKGG) are enriched in basic and acidic residues. Residue 301-308 (GSMGVGKT) coordinates ATP. Catalysis depends on glutamate 327, which acts as the Proton acceptor. 3 residues coordinate substrate: tyrosine 344, glutamine 365, and arginine 461.

This sequence belongs to the herpesviridae thymidine kinase family. As to quaternary structure, homodimer.

The catalysed reaction is thymidine + ATP = dTMP + ADP + H(+). Functionally, catalyzes the transfer of the gamma-phospho group of ATP to thymidine to generate dTMP in the salvage pathway of pyrimidine synthesis. The dTMP serves as a substrate for DNA polymerase during viral DNA replication. Allows the virus to be reactivated and to grow in non-proliferative cells lacking a high concentration of phosphorylated nucleic acid precursors. The chain is Thymidine kinase from Equine herpesvirus 2 (strain 86/87) (EHV-2).